A 285-amino-acid polypeptide reads, in one-letter code: CCR4-NOT transcription complex subunit 7 (285 aa).

A divalent metal cation is bound by residues D40, E42, D161, D230, and E278.

Belongs to the CAF1 family. As to quaternary structure, component of the CCR4-NOT complex. Requires Mn(2+) as cofactor. The cofactor is Mg(2+). Co(2+) serves as cofactor.

The protein localises to the nucleus. Its subcellular location is the cytoplasm. It carries out the reaction Exonucleolytic cleavage of poly(A) to 5'-AMP.. Its function is as follows. Has 3'-5' poly(A) exoribonuclease activity for synthetic poly(A) RNA substrate. Catalytic component of the CCR4-NOT complex which is one of the major cellular mRNA deadenylases and is linked to various cellular processes including bulk mRNA degradation, miRNA-mediated repression, translational repression during translational initiation and general transcription regulation. During miRNA-mediated repression the complex also seems to act as translational repressor during translational initiation. Additional complex functions may be a consequence of its influence on mRNA expression. This chain is CCR4-NOT transcription complex subunit 7 (cnot7), found in Xenopus laevis (African clawed frog).